The chain runs to 705 residues: Elongation factor G (705 aa).

The tr-type G domain maps to Asp-8–Leu-294. GTP contacts are provided by residues Ala-17 to Thr-24, Asp-92 to His-96, and Asn-146 to Asp-149.

The protein belongs to the TRAFAC class translation factor GTPase superfamily. Classic translation factor GTPase family. EF-G/EF-2 subfamily.

The protein resides in the cytoplasm. In terms of biological role, catalyzes the GTP-dependent ribosomal translocation step during translation elongation. During this step, the ribosome changes from the pre-translocational (PRE) to the post-translocational (POST) state as the newly formed A-site-bound peptidyl-tRNA and P-site-bound deacylated tRNA move to the P and E sites, respectively. Catalyzes the coordinated movement of the two tRNA molecules, the mRNA and conformational changes in the ribosome. This is Elongation factor G from Dinoroseobacter shibae (strain DSM 16493 / NCIMB 14021 / DFL 12).